The following is a 426-amino-acid chain: 5-aminovalerate aminotransferase DavT (426 aa).

Residues 112–113, Y139, and 240–243 contribute to the pyridoxal 5'-phosphate site; these read GS and DEVQ. K269 carries the N6-(pyridoxal phosphate)lysine modification. T298 lines the pyridoxal 5'-phosphate pocket.

It belongs to the class-III pyridoxal-phosphate-dependent aminotransferase family. It depends on pyridoxal 5'-phosphate as a cofactor.

The catalysed reaction is 5-aminopentanoate + 2-oxoglutarate = 5-oxopentanoate + L-glutamate. Functionally, catalyzes the conversion of 5-aminovalerate to 5-oxopentanoate. This chain is 5-aminovalerate aminotransferase DavT (davT), found in Pseudomonas aeruginosa (strain ATCC 15692 / DSM 22644 / CIP 104116 / JCM 14847 / LMG 12228 / 1C / PRS 101 / PAO1).